Reading from the N-terminus, the 645-residue chain is Phosphomethylpyrimidine synthase (645 aa).

Positions 1 to 12 are enriched in polar residues; it reads MSHNTVIPTTDI. The disordered stretch occupies residues 1-25; that stretch reads MSHNTVIPTTDISPKPDPARPRKAQ. Residues Asn253, Met282, Tyr311, His347, 367–369, 408–411, and Glu447 contribute to the substrate site; these read SRG and DGLR. His451 serves as a coordination point for Zn(2+). Tyr474 serves as a coordination point for substrate. His515 lines the Zn(2+) pocket. Cys595, Cys598, and Cys603 together coordinate [4Fe-4S] cluster.

Belongs to the ThiC family. Homodimer. Requires [4Fe-4S] cluster as cofactor.

The catalysed reaction is 5-amino-1-(5-phospho-beta-D-ribosyl)imidazole + S-adenosyl-L-methionine = 4-amino-2-methyl-5-(phosphooxymethyl)pyrimidine + CO + 5'-deoxyadenosine + formate + L-methionine + 3 H(+). The protein operates within cofactor biosynthesis; thiamine diphosphate biosynthesis. Its function is as follows. Catalyzes the synthesis of the hydroxymethylpyrimidine phosphate (HMP-P) moiety of thiamine from aminoimidazole ribotide (AIR) in a radical S-adenosyl-L-methionine (SAM)-dependent reaction. The sequence is that of Phosphomethylpyrimidine synthase from Photorhabdus laumondii subsp. laumondii (strain DSM 15139 / CIP 105565 / TT01) (Photorhabdus luminescens subsp. laumondii).